We begin with the raw amino-acid sequence, 961 residues long: Leucine--tRNA ligase (961 aa).

Positions 41-51 (PYLNGNLHAGH) match the 'HIGH' region motif. A 'KMSKS' region motif is present at residues 632-636 (KMSKS). Lysine 635 is a binding site for ATP.

The protein belongs to the class-I aminoacyl-tRNA synthetase family.

It localises to the cytoplasm. The enzyme catalyses tRNA(Leu) + L-leucine + ATP = L-leucyl-tRNA(Leu) + AMP + diphosphate. This chain is Leucine--tRNA ligase, found in Methanosarcina acetivorans (strain ATCC 35395 / DSM 2834 / JCM 12185 / C2A).